A 130-amino-acid chain; its full sequence is Small ribosomal subunit protein uS9 (130 aa).

Belongs to the universal ribosomal protein uS9 family.

The sequence is that of Small ribosomal subunit protein uS9 from Buchnera aphidicola subsp. Acyrthosiphon pisum (strain Tuc7).